A 267-amino-acid chain; its full sequence is Small ribosomal subunit protein uS2 (267 aa).

The interval 1 to 72 (MSGNEKEGLD…QLDEDVMPDE (72 aa)) is disordered. Positions 10-72 (DASDSDFDPS…QLDEDVMPDE (63 aa)) are enriched in acidic residues.

Belongs to the universal ribosomal protein uS2 family. The N-terminus is blocked.

The polypeptide is Small ribosomal subunit protein uS2 (rps2) (Haloarcula marismortui (strain ATCC 43049 / DSM 3752 / JCM 8966 / VKM B-1809) (Halobacterium marismortui)).